The following is an 83-amino-acid chain: Defensin-like protein 47 (83 aa).

The first 27 residues, 1-27, serve as a signal peptide directing secretion; sequence MGSTKTLVTCFLVIILAVSLPNNNVLA. 4 disulfides stabilise this stretch: C40–C81, C44–C68, C53–C79, and C57–C80.

Belongs to the DEFL family.

The protein resides in the secreted. The polypeptide is Defensin-like protein 47 (Arabidopsis thaliana (Mouse-ear cress)).